A 647-amino-acid chain; its full sequence is Beta-galactosidase (647 aa).

An N-terminal signal peptide occupies residues 1–24 (MLRVPLCTPLPLLALLQLLGAAHG). A propeptide spanning residues 25–29 (IYNVT) is cleaved from the precursor. N-linked (GlcNAc...) asparagine glycosylation occurs at asparagine 27. Residues tyrosine 84, glutamate 130, and asparagine 188 each contribute to the substrate site. Catalysis depends on glutamate 189, which acts as the Proton donor. A disulfide bond links cysteine 196 and cysteine 231. Asparagine 248 carries N-linked (GlcNAc...) asparagine glycosylation. Glutamate 269 acts as the Nucleophile in catalysis. Tyrosine 334 contacts substrate. Residues asparagine 500, asparagine 504, asparagine 510, asparagine 544, asparagine 557, and asparagine 617 are each glycosylated (N-linked (GlcNAc...) asparagine). A disulfide bond links cysteine 628 and cysteine 636.

The protein belongs to the glycosyl hydrolase 35 family. Homodimer. May form higher multimers.

The protein resides in the lysosome. The enzyme catalyses Hydrolysis of terminal non-reducing beta-D-galactose residues in beta-D-galactosides.. In terms of biological role, cleaves beta-linked terminal galactosyl residues from gangliosides, glycoproteins, and glycosaminoglycans. The polypeptide is Beta-galactosidase (Glb1) (Mus musculus (Mouse)).